Reading from the N-terminus, the 173-residue chain is MPRTQKNDNFVDKSFTVMADIILKILPTNKKAKEAFVYYRDGMSAQAEGEYAEALEYYEEALTLEEDTNDRGYILYNMGLIYASNGDHDKALELYHQAIELNPRLPQALNNIAVIYHYKGEKAKEDGDHDGGEALFDQAADYWIRAIRMAPNNYIEAQNWLKTTGRMQIDVFF.

TPR repeat units lie at residues 35 to 68 (AFVY…EEDT), 72 to 105 (GYIL…NPRL), and 120 to 153 (GEKA…APNN).

It belongs to the Ycf3 family.

Its subcellular location is the cellular thylakoid membrane. Functionally, essential for the assembly of the photosystem I (PSI) complex. May act as a chaperone-like factor to guide the assembly of the PSI subunits. In Trichormus variabilis (strain ATCC 29413 / PCC 7937) (Anabaena variabilis), this protein is Photosystem I assembly protein Ycf3.